A 648-amino-acid chain; its full sequence is Interferon-induced GTP-binding protein Mx1 (648 aa).

At Met1 the chain carries N-acetylmethionine. The interval 1–26 is disordered; it reads MVHSDLGIEELDSPESSLNGSEDMES. The Dynamin-type G domain occupies 56–329; it reads DLALPAIAVI…LIMHICKTLP (274 aa). The G1 motif stretch occupies residues 66–73; that stretch reads GDQSSGKS. 66–73 is a GTP binding site; it reads GDQSSGKS. The segment at 91–93 is G2 motif; that stretch reads VTR. A G3 motif region spans residues 167–170; it reads DLPG. Residues 167-171 and 236-239 contribute to the GTP site; these read DLPGI and TKPD. Positions 236 to 239 are G4 motif; it reads TKPD. The tract at residues 268 to 271 is G5 motif; sequence KCRG. The tract at residues 330–355 is bundle signaling element (BSE); it reads LLENQIKETHQRITEELQKYGKDIPE. The interval 355–522 is middle domain; the sequence is EEESEKMFCL…HFQMEQLVYC (168 aa). Positions 356 to 618 are stalk; sequence EESEKMFCLI…KDQYDWLLKE (263 aa). Residues 543-546 are critical for lipid-binding; sequence KNKK. Residues 560–648 enclose the GED domain; the sequence is TDEIFQHLTA…ARQRLAKFPG (89 aa).

This sequence belongs to the TRAFAC class dynamin-like GTPase superfamily. Dynamin/Fzo/YdjA family. As to quaternary structure, homooligomer. Oligomerizes into multimeric filamentous or ring-like structures by virtue of its stalk domain. Oligomerization is critical for GTPase activity, protein stability, and recognition of viral target structures. Interacts with TRPC1, TRPC3, TRPC4, TRPC5, TRPC6 and TRPC7. Interacts with HSPA5. Interacts with TUBB/TUBB5. Interacts with DDX39A and DDX39B. Post-translationally, ISGylated. Ubiquitously expressed.

The protein localises to the cytoplasm. It is found in the endoplasmic reticulum membrane. The protein resides in the perinuclear region. It localises to the nucleus. Interferon-induced dynamin-like GTPase with antiviral activity against rabies virus (RABV), vesicular stomatitis virus (VSV) and murine pneumonia virus (MPV). Isoform 1 but not isoform 2 shows antiviral activity against vesicular stomatitis virus (VSV). The polypeptide is Interferon-induced GTP-binding protein Mx1 (MX1) (Bos taurus (Bovine)).